The chain runs to 350 residues: Dihydroorotate dehydrogenase (quinone) (350 aa).

Residues Ala59–Lys63 and Thr83 each bind FMN. Substrate is bound at residue Lys63. Substrate is bound at residue Asn108 to Phe112. FMN is bound by residues Asn136 and Asn169. Asn169 lines the substrate pocket. Ser172 (nucleophile) is an active-site residue. Asn174 contacts substrate. Residues Lys214 and Thr242 each coordinate FMN. Asn243–Thr244 is a binding site for substrate. Residues Gly265, Gly294, and Tyr315–Ser316 contribute to the FMN site.

Belongs to the dihydroorotate dehydrogenase family. Type 2 subfamily. In terms of assembly, monomer. The cofactor is FMN.

It localises to the cell membrane. It catalyses the reaction (S)-dihydroorotate + a quinone = orotate + a quinol. Its pathway is pyrimidine metabolism; UMP biosynthesis via de novo pathway; orotate from (S)-dihydroorotate (quinone route): step 1/1. Its function is as follows. Catalyzes the conversion of dihydroorotate to orotate with quinone as electron acceptor. This chain is Dihydroorotate dehydrogenase (quinone), found in Aromatoleum aromaticum (strain DSM 19018 / LMG 30748 / EbN1) (Azoarcus sp. (strain EbN1)).